Here is a 417-residue protein sequence, read N- to C-terminus: Pre-mRNA-splicing factor PRP46 (417 aa).

WD repeat units follow at residues 119 to 159 (AHQG…LKAT), 162 to 201 (GHIM…SSSG), 209 to 248 (GHVG…EIMV), 251 to 290 (GHRS…TQLA), 293 to 334 (HHSK…NEFG), 337 to 376 (GENK…LLQS), and 385 to 417 (STES…WGEE).

The protein belongs to the WD repeat PRL1/PRL2 family. As to quaternary structure, associated with the spliceosome.

The protein localises to the cytoplasm. Its subcellular location is the nucleus. Functionally, involved in pre-mRNA splicing and required for cell cycle progression at G2/M. The protein is Pre-mRNA-splicing factor PRP46 (PRP46) of Debaryomyces hansenii (strain ATCC 36239 / CBS 767 / BCRC 21394 / JCM 1990 / NBRC 0083 / IGC 2968) (Yeast).